A 239-amino-acid chain; its full sequence is Calcium-activated potassium channel subunit beta-3 (239 aa).

Residues 1 to 51 (MQPFSIPVQITLQGGRRRQGRTALPASGISNGDPLKVHPKLPSSAGEDRAT) are Cytoplasmic-facing. Residues 15-38 (GRRRQGRTALPASGISNGDPLKVH) are disordered. The chain crosses the membrane as a helical span at residues 52–72 (LLGIAMMASSVLMFFLLGTTV). Residues 73–197 (LKPFMLSSPR…GVVLRKSGHK (125 aa)) lie on the Extracellular side of the membrane. N-linked (GlcNAc...) asparagine glycosylation is found at Asn-86, Asn-123, and Asn-174. A helical membrane pass occupies residues 198–218 (VVFHCLFWPLLTLLGGALIVG). At 219–239 (LVRLTQHLSFQCEKYRAVVRA) the chain is on the cytoplasmic side.

The protein belongs to the KCNMB (TC 8.A.14.1) family. KCNMB3 subfamily. As to quaternary structure, interacts with KCNMA1 tetramer. There are probably 4 molecules of KCMNB3 per KCNMA1 tetramer. N-glycosylated. Post-translationally, the extracellular domain contains disulfide bond essential for the gating mechanism.

Its subcellular location is the membrane. Functionally, regulatory subunit of the calcium activated potassium KCNMA1 (maxiK) channel. Modulates the calcium sensitivity and gating kinetics of KCNMA1, thereby contributing to KCNMA1 channel diversity. Alters the functional properties of the current expressed by the KCNMA1 channel. May partially inactivate the current of KCNBMA. Two or more subunits of KCNMB3 are required to block the KCNMA1 tetramer. This Rattus norvegicus (Rat) protein is Calcium-activated potassium channel subunit beta-3.